A 175-amino-acid polypeptide reads, in one-letter code: Probable DNA replication complex GINS protein PSF2 (175 aa).

The protein belongs to the GINS2/PSF2 family. As to quaternary structure, component of the GINS complex which is a heterotetramer of SLD5, PSF1, PSF2 and PSF3.

It is found in the nucleus. The GINS complex plays an essential role in the initiation of DNA replication. This chain is Probable DNA replication complex GINS protein PSF2, found in Encephalitozoon cuniculi (strain GB-M1) (Microsporidian parasite).